Reading from the N-terminus, the 408-residue chain is UPF0761 membrane protein NMCC_0461 (408 aa).

6 helical membrane-spanning segments follow: residues 43-63 (LLALVPVLTVMVAVASIFPVF), 100-120 (LTAIGSVMLVVTSLMLIRTID), 139-159 (FLVYWALLTFGPLSLGVGISF), 176-196 (WSGALRTAATLTFMTLLLWGL), 210-230 (AFVGALATAFCLETARSLFTW), and 248-268 (VPFFLLWLNLLWTLVLGGAVL).

This sequence belongs to the UPF0761 family.

It is found in the cell inner membrane. This chain is UPF0761 membrane protein NMCC_0461, found in Neisseria meningitidis serogroup C (strain 053442).